The sequence spans 469 residues: Citrate synthase, mitochondrial (469 aa).

Residues 1–30 (MSFLSVSRLAPKLLNSKNATYFLVAARNAS) constitute a mitochondrion transit peptide. Catalysis depends on residues H304 and H350. R359 is an oxaloacetate binding site. D405 is an active-site residue. Residues R431 and R451 each coordinate oxaloacetate.

The protein belongs to the citrate synthase family. Homodimer.

It is found in the mitochondrion matrix. The enzyme catalyses oxaloacetate + acetyl-CoA + H2O = citrate + CoA + H(+). The protein operates within carbohydrate metabolism; tricarboxylic acid cycle; isocitrate from oxaloacetate: step 1/2. Functionally, key enzyme of the Krebs tricarboxylic acid cycle which catalyzes the synthesis of citrate from acetyl coenzyme A and oxaloacetate. The polypeptide is Citrate synthase, mitochondrial (cs) (Katsuwonus pelamis (Skipjack tuna)).